We begin with the raw amino-acid sequence, 222 residues long: Probable pyridoxal 5'-phosphate synthase subunit SNO2 (222 aa).

58–60 serves as a coordination point for L-glutamine; that stretch reads GES. Cys-91 (nucleophile) is an active-site residue. Residues Arg-120 and 151–152 each bind L-glutamine; that span reads IR. Residues His-197 and Glu-199 each act as charge relay system in the active site.

The protein belongs to the glutaminase PdxT/SNO family.

The catalysed reaction is aldehydo-D-ribose 5-phosphate + D-glyceraldehyde 3-phosphate + L-glutamine = pyridoxal 5'-phosphate + L-glutamate + phosphate + 3 H2O + H(+). The enzyme catalyses L-glutamine + H2O = L-glutamate + NH4(+). It participates in cofactor biosynthesis; pyridoxal 5'-phosphate biosynthesis. In terms of biological role, catalyzes the hydrolysis of glutamine to glutamate and ammonia as part of the biosynthesis of pyridoxal 5'-phosphate. The resulting ammonia molecule is channeled to the active site of a SNZ isoform. This is Probable pyridoxal 5'-phosphate synthase subunit SNO2 (SNO2) from Saccharomyces cerevisiae (strain ATCC 204508 / S288c) (Baker's yeast).